Consider the following 959-residue polypeptide: Glycine dehydrogenase (decarboxylating) (959 aa).

The residue at position 708 (Lys708) is an N6-(pyridoxal phosphate)lysine.

Belongs to the GcvP family. The glycine cleavage system is composed of four proteins: P, T, L and H. Pyridoxal 5'-phosphate serves as cofactor.

It catalyses the reaction N(6)-[(R)-lipoyl]-L-lysyl-[glycine-cleavage complex H protein] + glycine + H(+) = N(6)-[(R)-S(8)-aminomethyldihydrolipoyl]-L-lysyl-[glycine-cleavage complex H protein] + CO2. The glycine cleavage system catalyzes the degradation of glycine. The P protein binds the alpha-amino group of glycine through its pyridoxal phosphate cofactor; CO(2) is released and the remaining methylamine moiety is then transferred to the lipoamide cofactor of the H protein. This is Glycine dehydrogenase (decarboxylating) from Serratia proteamaculans (strain 568).